Here is a 154-residue protein sequence, read N- to C-terminus: Lipoprotein signal peptidase (154 aa).

3 consecutive transmembrane segments (helical) span residues 7–27 (VLYL…KNYI), 58–78 (IFSG…AVVV), and 88–108 (NWLF…NFID). Catalysis depends on residues aspartate 117 and aspartate 133. The chain crosses the membrane as a helical span at residues 128 to 148 (IFNIADSAITVGIVLVFIYLI).

It belongs to the peptidase A8 family.

It localises to the cell membrane. It catalyses the reaction Release of signal peptides from bacterial membrane prolipoproteins. Hydrolyzes -Xaa-Yaa-Zaa-|-(S,diacylglyceryl)Cys-, in which Xaa is hydrophobic (preferably Leu), and Yaa (Ala or Ser) and Zaa (Gly or Ala) have small, neutral side chains.. It functions in the pathway protein modification; lipoprotein biosynthesis (signal peptide cleavage). Functionally, this protein specifically catalyzes the removal of signal peptides from prolipoproteins. This Lactobacillus gasseri (strain ATCC 33323 / DSM 20243 / BCRC 14619 / CIP 102991 / JCM 1131 / KCTC 3163 / NCIMB 11718 / NCTC 13722 / AM63) protein is Lipoprotein signal peptidase.